A 1055-amino-acid chain; its full sequence is Protein SUPPRESSOR OF QUENCHING 1, chloroplastic (1055 aa).

The transit peptide at methionine 1–serine 56 directs the protein to the chloroplast. Valine 57 is subject to N-acetylvaline. Residues alanine 59–arginine 327 lie on the Stromal side of the membrane. The active-site Nucleophile is the aspartate 80. Mg(2+) is bound by residues aspartate 80 and aspartate 82. Aspartate 80 is a substrate binding site. Catalysis depends on aspartate 82, which acts as the Proton donor. Substrate is bound by residues glutamate 89, threonine 118–lysine 122, alanine 141–arginine 144, and serine 183–lysine 189. Aspartate 242 contacts Mg(2+). The helical transmembrane segment at tyrosine 328–tryptophan 345 threads the bilayer. Residues lysine 346–arginine 1055 lie on the Lumenal side of the membrane. The 178-residue stretch at alanine 359–threonine 536 folds into the Thioredoxin domain. Cysteine 431 and cysteine 434 are disulfide-bonded. NHL repeat units lie at residues proline 565–glutamate 597, glycine 611–leucine 647, glycine 673–leucine 712, leucine 802–valine 832, and glycine 854–asparagine 887.

This sequence in the N-terminal section; belongs to the HAD-like hydrolase superfamily. It in the C-terminal section; belongs to the thioredoxin family. Mg(2+) is required as a cofactor.

Its subcellular location is the plastid. The protein localises to the chloroplast thylakoid membrane. Its function is as follows. Required to maintain light harvesting efficiency, especially during nonphotochemical quenching (NPQ) recovery, via the regulation of chlorophyll excited-state lifetime probably by preventing the formation of a slowly reversible form of antenna quenching. This Arabidopsis thaliana (Mouse-ear cress) protein is Protein SUPPRESSOR OF QUENCHING 1, chloroplastic.